Reading from the N-terminus, the 525-residue chain is GMP synthase [glutamine-hydrolyzing] (525 aa).

Residues Arg-9–Leu-207 form the Glutamine amidotransferase type-1 domain. Cys-86 serves as the catalytic Nucleophile. Active-site residues include His-181 and Glu-183. The region spanning Trp-208 to Arg-400 is the GMPS ATP-PPase domain. Residue Ser-235–Ser-241 coordinates ATP.

As to quaternary structure, homodimer.

It catalyses the reaction XMP + L-glutamine + ATP + H2O = GMP + L-glutamate + AMP + diphosphate + 2 H(+). Its pathway is purine metabolism; GMP biosynthesis; GMP from XMP (L-Gln route): step 1/1. Its function is as follows. Catalyzes the synthesis of GMP from XMP. This Klebsiella pneumoniae (strain 342) protein is GMP synthase [glutamine-hydrolyzing].